The primary structure comprises 383 residues: MQGKPRIAVIGAGLGGTAGAALMARAGFNVRLYEQAPAFSRLGAGIHLGPNVMKIMRRIGIEDELNRQGSHPDYWYSRDWQSGAELARIPLGDYAVSHYGATYLTVHRGDFHALMTAALPAGLLQFNKRLTRVDEDDDVVRLHFADGSVEEAEIVIGADGVNSRLREHLLGAELPKYTGYVAHRAVFPTPLDSGSLPFDMCVKWWSDDRHMMVYFVTGKRDEIYYVTGVPEQQWDMGKSWVPSSKAEMRAAFAGWHPTVQALIEATPEVSKWPLLERDPLPLWSRGRIVLLGDACHPMKPHMAQGAAMAIEDAAMLTRIFEQTGLQDHAAAFRLYEDNRAERASRVQRVSHDNTWLRTNENPDWCFGYDVYAEPLVEGRRAAA.

An N-terminal signal peptide occupies residues 1–26 (MQGKPRIAVIGAGLGGTAGAALMARA). Residues Gly-15, 34–35 (EQ), His-47, Arg-108, and Leu-130 each bind FAD. His-47 functions as the Proton acceptor in the catalytic mechanism. Tyr-214 acts as the Proton acceptor in catalysis. FAD-binding positions include Asp-293 and 306–307 (AA).

It belongs to the 6-hydroxynicotinate 3-monooxygenase family. Monomer. Requires FAD as cofactor.

The enzyme catalyses 6-hydroxynicotinate + NADH + O2 + 2 H(+) = 2,5-dihydroxypyridine + CO2 + NAD(+) + H2O. It functions in the pathway cofactor degradation; nicotinate degradation. With respect to regulation, competitively inhibited by 6-hydroxynicotinaldehyde. Flavin-dependent monooxygenase (FMO) that catalyzes the decarboxylative hydroxylation of 6-hydroxynicotinic acid (6-HNA) to 2,5-dihydroxypyridine (2,5-DHP) with concomitant oxidation of NADH, a step in the aerobic nicotinate degradation pathway. Is also active on the non-natural substrate 5-chloro-6-hydroxynicotinate, and is much less efficient on the substrate analog 4-hydroxybenzoate. The polypeptide is 6-hydroxynicotinate 3-monooxygenase (Bordetella bronchiseptica (strain ATCC BAA-588 / NCTC 13252 / RB50) (Alcaligenes bronchisepticus)).